The chain runs to 271 residues: NH(3)-dependent NAD(+) synthetase (271 aa).

ATP is bound at residue 43 to 50 (GISGGQDS). Asp-49 is a Mg(2+) binding site. A deamido-NAD(+)-binding site is contributed by Arg-137. Thr-157 is an ATP binding site. Glu-162 contacts Mg(2+). Deamido-NAD(+) contacts are provided by Lys-170 and Asp-177. Residues Lys-186 and Thr-208 each coordinate ATP. 257-258 (HK) contributes to the deamido-NAD(+) binding site.

It belongs to the NAD synthetase family. As to quaternary structure, homodimer.

It carries out the reaction deamido-NAD(+) + NH4(+) + ATP = AMP + diphosphate + NAD(+) + H(+). The protein operates within cofactor biosynthesis; NAD(+) biosynthesis; NAD(+) from deamido-NAD(+) (ammonia route): step 1/1. Its function is as follows. Catalyzes the ATP-dependent amidation of deamido-NAD to form NAD. Uses ammonia as a nitrogen source. In Exiguobacterium sibiricum (strain DSM 17290 / CCUG 55495 / CIP 109462 / JCM 13490 / 255-15), this protein is NH(3)-dependent NAD(+) synthetase.